We begin with the raw amino-acid sequence, 263 residues long: Protein TILLER ANGLE CONTROL 1 (263 aa).

The short motif at 55-61 (GILAIGT) is the IGT motif element. A disordered region spans residues 243 to 263 (GKKIHPEQLNGRSNAEGPLTA).

It belongs to the TAC family. In terms of tissue distribution, highly expressed in leaf sheath pulvinus. Expressed in shoot apical meristem and leaves.

Involved in the regulation of leaf growth angle. Promotes horizontal shoot growth. The protein is Protein TILLER ANGLE CONTROL 1 of Zea mays (Maize).